The primary structure comprises 115 residues: MKFVLLFGVLLVTLFSYSSAEMLDDFDQADEEELLSLIEKEEARAKECTPRFYDCSHDRHSCCRSELFKDVCTCFYPEGGDNEVCTCQQPKHLKYMEKAADKAKKFGGKIKKWFG.

The signal sequence occupies residues methionine 1–alanine 20. Residues glutamate 21–arginine 44 constitute a propeptide that is removed on maturation. Intrachain disulfides connect cysteine 48/cysteine 63, cysteine 55/cysteine 72, cysteine 62/cysteine 87, and cysteine 74/cysteine 85.

This sequence belongs to the neurotoxin 19 (CSTX) family. 01 subfamily. As to expression, expressed by the venom gland.

Its subcellular location is the secreted. This Lycosa singoriensis (Wolf spider) protein is U3-lycotoxin-Ls1a.